Reading from the N-terminus, the 161-residue chain is Transcription antitermination protein NusB (161 aa).

This sequence belongs to the NusB family.

Involved in transcription antitermination. Required for transcription of ribosomal RNA (rRNA) genes. Binds specifically to the boxA antiterminator sequence of the ribosomal RNA (rrn) operons. The polypeptide is Transcription antitermination protein NusB (Nitrobacter winogradskyi (strain ATCC 25391 / DSM 10237 / CIP 104748 / NCIMB 11846 / Nb-255)).